A 263-amino-acid chain; its full sequence is Post-GPI attachment to proteins factor 2 (263 aa).

The next 6 membrane-spanning stretches (helical) occupy residues Phe-16–Leu-36, Tyr-69–Phe-89, Phe-109–Thr-129, Cys-143–Asn-163, Tyr-180–Trp-200, and Pro-208–Phe-228.

The protein belongs to the PGAP2 family.

It localises to the golgi apparatus membrane. Its subcellular location is the endoplasmic reticulum membrane. Involved in the lipid remodeling steps of GPI-anchor maturation. Required for stable expression of GPI-anchored proteins at the cell surface. This Caenorhabditis elegans protein is Post-GPI attachment to proteins factor 2.